Here is a 212-residue protein sequence, read N- to C-terminus: Leucyl/phenylalanyl-tRNA--protein transferase (212 aa).

Belongs to the L/F-transferase family.

The protein localises to the cytoplasm. The enzyme catalyses N-terminal L-lysyl-[protein] + L-leucyl-tRNA(Leu) = N-terminal L-leucyl-L-lysyl-[protein] + tRNA(Leu) + H(+). The catalysed reaction is N-terminal L-arginyl-[protein] + L-leucyl-tRNA(Leu) = N-terminal L-leucyl-L-arginyl-[protein] + tRNA(Leu) + H(+). It catalyses the reaction L-phenylalanyl-tRNA(Phe) + an N-terminal L-alpha-aminoacyl-[protein] = an N-terminal L-phenylalanyl-L-alpha-aminoacyl-[protein] + tRNA(Phe). Functionally, functions in the N-end rule pathway of protein degradation where it conjugates Leu, Phe and, less efficiently, Met from aminoacyl-tRNAs to the N-termini of proteins containing an N-terminal arginine or lysine. This chain is Leucyl/phenylalanyl-tRNA--protein transferase, found in Paracoccus denitrificans (strain Pd 1222).